A 324-amino-acid chain; its full sequence is tRNA dimethylallyltransferase (324 aa).

17–24 (GPTASGKT) is a binding site for ATP. Substrate is bound at residue 19-24 (TASGKT). Interaction with substrate tRNA stretches follow at residues 42 to 45 (DSAL), 166 to 170 (QRIQR), 251 to 256 (RCVGYR), and 284 to 291 (KRQITWLR).

This sequence belongs to the IPP transferase family. As to quaternary structure, monomer. Mg(2+) is required as a cofactor.

The catalysed reaction is adenosine(37) in tRNA + dimethylallyl diphosphate = N(6)-dimethylallyladenosine(37) in tRNA + diphosphate. Catalyzes the transfer of a dimethylallyl group onto the adenine at position 37 in tRNAs that read codons beginning with uridine, leading to the formation of N6-(dimethylallyl)adenosine (i(6)A). In Burkholderia orbicola (strain AU 1054), this protein is tRNA dimethylallyltransferase.